The primary structure comprises 554 residues: Glutamine--tRNA ligase (554 aa).

Residues 34–44 (PEPNGYLHIGH) carry the 'HIGH' region motif. ATP is bound by residues 35 to 37 (EPN) and 41 to 47 (HIGHAKS). Residues Asp67 and Tyr212 each contribute to the L-glutamine site. ATP is bound by residues Thr231, 261–262 (RL), and 269–271 (MSK). The 'KMSKS' region motif lies at 268–272 (VMSKR). The interaction with tRNA stretch occupies residues 317 to 324 (TKQDNTIE).

It belongs to the class-I aminoacyl-tRNA synthetase family. Monomer.

It localises to the cytoplasm. It catalyses the reaction tRNA(Gln) + L-glutamine + ATP = L-glutaminyl-tRNA(Gln) + AMP + diphosphate. This Escherichia coli O17:K52:H18 (strain UMN026 / ExPEC) protein is Glutamine--tRNA ligase.